The primary structure comprises 486 residues: Cardiolipin synthase A (486 aa).

The next 2 helical transmembrane spans lie at 3–23 (IFYN…IANI) and 38–58 (MSWL…WFFF). 2 PLD phosphodiesterase domains span residues 219-246 (VDVR…VDPY) and 399-426 (QKGL…DMRS). Residues His-224, Lys-226, Asp-231, His-404, Lys-406, and Asp-411 contribute to the active site.

The protein belongs to the phospholipase D family. Cardiolipin synthase subfamily. ClsA sub-subfamily.

The protein resides in the cell inner membrane. It carries out the reaction 2 a 1,2-diacyl-sn-glycero-3-phospho-(1'-sn-glycerol) = a cardiolipin + glycerol. Catalyzes the reversible phosphatidyl group transfer from one phosphatidylglycerol molecule to another to form cardiolipin (CL) (diphosphatidylglycerol) and glycerol. The polypeptide is Cardiolipin synthase A (Buchnera aphidicola subsp. Acyrthosiphon pisum (strain APS) (Acyrthosiphon pisum symbiotic bacterium)).